The primary structure comprises 426 residues: Serine--tRNA ligase (426 aa).

Residue 228-230 (TSE) participates in L-serine binding. Residues 259 to 261 (RRE) and valine 275 each bind ATP. Position 282 (glutamate 282) interacts with L-serine. 346 to 349 (ELTS) is an ATP binding site. Threonine 386 serves as a coordination point for L-serine.

It belongs to the class-II aminoacyl-tRNA synthetase family. Type-1 seryl-tRNA synthetase subfamily. As to quaternary structure, homodimer. The tRNA molecule binds across the dimer.

It is found in the cytoplasm. The catalysed reaction is tRNA(Ser) + L-serine + ATP = L-seryl-tRNA(Ser) + AMP + diphosphate + H(+). The enzyme catalyses tRNA(Sec) + L-serine + ATP = L-seryl-tRNA(Sec) + AMP + diphosphate + H(+). It functions in the pathway aminoacyl-tRNA biosynthesis; selenocysteinyl-tRNA(Sec) biosynthesis; L-seryl-tRNA(Sec) from L-serine and tRNA(Sec): step 1/1. Its function is as follows. Catalyzes the attachment of serine to tRNA(Ser). Is also able to aminoacylate tRNA(Sec) with serine, to form the misacylated tRNA L-seryl-tRNA(Sec), which will be further converted into selenocysteinyl-tRNA(Sec). The chain is Serine--tRNA ligase from Arthrobacter sp. (strain FB24).